Reading from the N-terminus, the 244-residue chain is Triosephosphate isomerase (244 aa).

A substrate-binding site is contributed by 9–11 (NWK). His-93 (electrophile) is an active-site residue. The active-site Proton acceptor is Glu-161. Substrate-binding positions include Gly-167, Ser-206, and 227-228 (GG).

It belongs to the triosephosphate isomerase family. As to quaternary structure, homodimer.

The protein resides in the cytoplasm. The enzyme catalyses D-glyceraldehyde 3-phosphate = dihydroxyacetone phosphate. It functions in the pathway carbohydrate biosynthesis; gluconeogenesis. It participates in carbohydrate degradation; glycolysis; D-glyceraldehyde 3-phosphate from glycerone phosphate: step 1/1. In terms of biological role, involved in the gluconeogenesis. Catalyzes stereospecifically the conversion of dihydroxyacetone phosphate (DHAP) to D-glyceraldehyde-3-phosphate (G3P). This is Triosephosphate isomerase from Deinococcus geothermalis (strain DSM 11300 / CIP 105573 / AG-3a).